A 54-amino-acid chain; its full sequence is Sec-independent protein translocase protein TatA (54 aa).

A helical transmembrane segment spans residues 1–21; that stretch reads MGMSFSHLLIVLLIIFVLFGA.

This sequence belongs to the TatA/E family. In terms of assembly, the Tat system comprises two distinct complexes: a TatABC complex, containing multiple copies of TatA, TatB and TatC subunits, and a separate TatA complex, containing only TatA subunits. Substrates initially bind to the TatABC complex, which probably triggers association of the separate TatA complex to form the active translocon.

The protein resides in the cell inner membrane. Functionally, part of the twin-arginine translocation (Tat) system that transports large folded proteins containing a characteristic twin-arginine motif in their signal peptide across membranes. TatA could form the protein-conducting channel of the Tat system. This chain is Sec-independent protein translocase protein TatA, found in Rickettsia canadensis (strain McKiel).